The sequence spans 413 residues: 4-hydroxy-3-methylbut-2-en-1-yl diphosphate synthase (flavodoxin) (413 aa).

[4Fe-4S] cluster-binding residues include Cys-305, Cys-308, Cys-351, and Glu-358.

Belongs to the IspG family. [4Fe-4S] cluster serves as cofactor.

It carries out the reaction (2E)-4-hydroxy-3-methylbut-2-enyl diphosphate + oxidized [flavodoxin] + H2O + 2 H(+) = 2-C-methyl-D-erythritol 2,4-cyclic diphosphate + reduced [flavodoxin]. Its pathway is isoprenoid biosynthesis; isopentenyl diphosphate biosynthesis via DXP pathway; isopentenyl diphosphate from 1-deoxy-D-xylulose 5-phosphate: step 5/6. Its function is as follows. Converts 2C-methyl-D-erythritol 2,4-cyclodiphosphate (ME-2,4cPP) into 1-hydroxy-2-methyl-2-(E)-butenyl 4-diphosphate. The protein is 4-hydroxy-3-methylbut-2-en-1-yl diphosphate synthase (flavodoxin) of Bartonella tribocorum (strain CIP 105476 / IBS 506).